A 509-amino-acid polypeptide reads, in one-letter code: Maturase K (509 aa).

It belongs to the intron maturase 2 family. MatK subfamily.

The protein localises to the plastid. The protein resides in the chloroplast. Usually encoded in the trnK tRNA gene intron. Probably assists in splicing its own and other chloroplast group II introns. This is Maturase K from Solanum lycopersicum (Tomato).